Consider the following 219-residue polypeptide: Large ribosomal subunit protein uL3 (219 aa).

It belongs to the universal ribosomal protein uL3 family. In terms of assembly, part of the 50S ribosomal subunit. Forms a cluster with proteins L14 and L19.

Functionally, one of the primary rRNA binding proteins, it binds directly near the 3'-end of the 23S rRNA, where it nucleates assembly of the 50S subunit. This is Large ribosomal subunit protein uL3 from Corynebacterium kroppenstedtii (strain DSM 44385 / JCM 11950 / CIP 105744 / CCUG 35717).